The primary structure comprises 331 residues: UDP-N-acetylenolpyruvoylglucosamine reductase (331 aa).

One can recognise an FAD-binding PCMH-type domain in the interval arginine 54–glycine 221. The active site involves arginine 200. Residue serine 251 is the Proton donor of the active site. Glutamate 321 is an active-site residue.

The protein belongs to the MurB family. The cofactor is FAD.

The protein localises to the cytoplasm. It carries out the reaction UDP-N-acetyl-alpha-D-muramate + NADP(+) = UDP-N-acetyl-3-O-(1-carboxyvinyl)-alpha-D-glucosamine + NADPH + H(+). The protein operates within cell wall biogenesis; peptidoglycan biosynthesis. Its function is as follows. Cell wall formation. The polypeptide is UDP-N-acetylenolpyruvoylglucosamine reductase (Nostoc sp. (strain PCC 7120 / SAG 25.82 / UTEX 2576)).